The chain runs to 373 residues: uncharacterized protein (373 aa).

Residues Y180–W202 form a helical membrane-spanning segment.

The protein resides in the membrane. This is an uncharacterized protein from Rickettsia prowazekii (strain Madrid E).